The sequence spans 440 residues: Chromosome partition protein MukF (440 aa).

The segment at 208–236 (LSETSGTLRELQDTLEAAGDKLQANLLRI) is leucine-zipper.

It belongs to the MukF family. Interacts, and probably forms a ternary complex, with MukE and MukB via its C-terminal region. The complex formation is stimulated by calcium or magnesium. It is required for an interaction between MukE and MukB.

Its subcellular location is the cytoplasm. The protein resides in the nucleoid. In terms of biological role, involved in chromosome condensation, segregation and cell cycle progression. May participate in facilitating chromosome segregation by condensation DNA from both sides of a centrally located replisome during cell division. Not required for mini-F plasmid partitioning. Probably acts via its interaction with MukB and MukE. Overexpression results in anucleate cells. It has a calcium binding activity. The protein is Chromosome partition protein MukF of Salmonella typhi.